Consider the following 301-residue polypeptide: Dihydroorotate dehydrogenase B (NAD(+)), catalytic subunit (301 aa).

Substrate is bound by residues lysine 44, 68–72 (NAMGL), and asparagine 122. Position 44–45 (44–45 (KS)) interacts with FMN. An FMN-binding site is contributed by asparagine 122. The Nucleophile role is filled by cysteine 125. FMN contacts are provided by lysine 160 and isoleucine 186. 187-188 (NT) contacts substrate. FMN contacts are provided by residues glycine 212, 238–239 (GG), and 260–261 (GS).

The protein belongs to the dihydroorotate dehydrogenase family. Type 1 subfamily. As to quaternary structure, heterotetramer of 2 PyrK and 2 PyrD type B subunits. It depends on FMN as a cofactor.

Its subcellular location is the cytoplasm. It carries out the reaction (S)-dihydroorotate + NAD(+) = orotate + NADH + H(+). The protein operates within pyrimidine metabolism; UMP biosynthesis via de novo pathway; orotate from (S)-dihydroorotate (NAD(+) route): step 1/1. In terms of biological role, catalyzes the conversion of dihydroorotate to orotate with NAD(+) as electron acceptor. The protein is Dihydroorotate dehydrogenase B (NAD(+)), catalytic subunit (pyrD) of Methanocella arvoryzae (strain DSM 22066 / NBRC 105507 / MRE50).